A 500-amino-acid polypeptide reads, in one-letter code: Lysine--tRNA ligase (500 aa).

Mg(2+)-binding residues include E410 and E417.

Belongs to the class-II aminoacyl-tRNA synthetase family. Homodimer. Requires Mg(2+) as cofactor.

Its subcellular location is the cytoplasm. It catalyses the reaction tRNA(Lys) + L-lysine + ATP = L-lysyl-tRNA(Lys) + AMP + diphosphate. The sequence is that of Lysine--tRNA ligase from Shewanella sp. (strain ANA-3).